The primary structure comprises 155 residues: Putative pre-16S rRNA nuclease (155 aa).

The protein belongs to the YqgF nuclease family.

It is found in the cytoplasm. Could be a nuclease involved in processing of the 5'-end of pre-16S rRNA. This chain is Putative pre-16S rRNA nuclease, found in Xylella fastidiosa (strain M23).